Reading from the N-terminus, the 443-residue chain is Tol-Pal system protein TolB (443 aa).

Residues Met1–Ala33 form the signal peptide.

The protein belongs to the TolB family. As to quaternary structure, the Tol-Pal system is composed of five core proteins: the inner membrane proteins TolA, TolQ and TolR, the periplasmic protein TolB and the outer membrane protein Pal. They form a network linking the inner and outer membranes and the peptidoglycan layer.

It localises to the periplasm. Part of the Tol-Pal system, which plays a role in outer membrane invagination during cell division and is important for maintaining outer membrane integrity. In Brucella suis (strain ATCC 23445 / NCTC 10510), this protein is Tol-Pal system protein TolB.